The following is a 702-amino-acid chain: Polyribonucleotide nucleotidyltransferase (702 aa).

Positions 487 and 493 each coordinate Mg(2+). The KH domain maps to 554–613 (PRLLTIKIHPDKIREVIGKGGSTIQAITKETGTQIDIQDDGTIVIASVNAIAAQAAKARI). Residues 623-691 (GRIYEGKVAK…KQGRIRLSMK (69 aa)) form the S1 motif domain.

The protein belongs to the polyribonucleotide nucleotidyltransferase family. As to quaternary structure, component of the RNA degradosome, which is a multiprotein complex involved in RNA processing and mRNA degradation. The cofactor is Mg(2+).

It is found in the cytoplasm. The catalysed reaction is RNA(n+1) + phosphate = RNA(n) + a ribonucleoside 5'-diphosphate. Functionally, involved in mRNA degradation. Catalyzes the phosphorolysis of single-stranded polyribonucleotides processively in the 3'- to 5'-direction. This Stenotrophomonas maltophilia (strain K279a) protein is Polyribonucleotide nucleotidyltransferase.